Here is a 297-residue protein sequence, read N- to C-terminus: Small ribosomal subunit protein uS2 (297 aa).

The tract at residues 266-297 (GASWDAAEPSDWAATPAAAGQEWAASGATEQW) is disordered. Positions 282 to 297 (AAAGQEWAASGATEQW) are enriched in low complexity.

This sequence belongs to the universal ribosomal protein uS2 family. In terms of assembly, component of the small ribosomal subunit. Mature ribosomes consist of a small (40S) and a large (60S) subunit. The 40S subunit contains about 33 different proteins and 1 molecule of RNA (18S). The 60S subunit contains about 49 different proteins and 3 molecules of RNA (25S, 5.8S and 5S). Interacts with rps21.

The protein localises to the cytoplasm. Functionally, required for the assembly and/or stability of the 40S ribosomal subunit. Required for the processing of the 20S rRNA-precursor to mature 18S rRNA in a late step of the maturation of 40S ribosomal subunits. This is Small ribosomal subunit protein uS2 (rps0) from Sclerotinia sclerotiorum (strain ATCC 18683 / 1980 / Ss-1) (White mold).